The chain runs to 206 residues: Ras-related protein Rab-14 (206 aa).

15–22 serves as a coordination point for GTP; it reads GDMGVGKS. Residues 37-45 carry the Effector region motif; it reads SPHTIGVEF. GTP-binding positions include 63–67 and 121–124; these read DTAGQ and NKKD. The disordered stretch occupies residues 182 to 206; sequence PDGGITKNPPQTITDKPQDASKCSC. Residues 189-206 show a composition bias toward polar residues; it reads NPPQTITDKPQDASKCSC. S-geranylgeranyl cysteine attachment occurs at residues Cys-204 and Cys-206. The residue at position 206 (Cys-206) is a Cysteine methyl ester.

Belongs to the small GTPase superfamily. Rab family.

It is found in the endosome. Its subcellular location is the contractile vacuole. The protein localises to the membrane. It catalyses the reaction GTP + H2O = GDP + phosphate + H(+). Rab activation is generally mediated by a guanine exchange factor (GEF), while inactivation through hydrolysis of bound GTP is catalyzed by a GTPase activating protein (GAP). That Rab is activated by the DENND6A and DENND6B guanine exchange factors (GEF). Its function is as follows. The small GTPases Rab are key regulators of intracellular membrane trafficking, from the formation of transport vesicles to their fusion with membranes. Rabs cycle between an inactive GDP-bound form and an active GTP-bound form that is able to recruit to membranes different set of downstream effectors directly responsible for vesicle formation, movement, tethering and fusion. Regulates the fusion of phagosomes and lysosomes. This chain is Ras-related protein Rab-14 (rab14), found in Dictyostelium discoideum (Social amoeba).